The following is a 313-amino-acid chain: Porphobilinogen deaminase (313 aa).

Position 242 is an S-(dipyrrolylmethanemethyl)cysteine (cysteine 242).

The protein belongs to the HMBS family. As to quaternary structure, monomer. Dipyrromethane is required as a cofactor.

The catalysed reaction is 4 porphobilinogen + H2O = hydroxymethylbilane + 4 NH4(+). It functions in the pathway porphyrin-containing compound metabolism; protoporphyrin-IX biosynthesis; coproporphyrinogen-III from 5-aminolevulinate: step 2/4. Tetrapolymerization of the monopyrrole PBG into the hydroxymethylbilane pre-uroporphyrinogen in several discrete steps. In Pectobacterium atrosepticum (strain SCRI 1043 / ATCC BAA-672) (Erwinia carotovora subsp. atroseptica), this protein is Porphobilinogen deaminase.